A 414-amino-acid chain; its full sequence is MADEHRQPEVNIGLVGHVDHGKTTLVRALSGEWTDQHSEEMKRGISIRLGYADATLRRCPDCDEPECYTVAETCPEHDTATEIERTVSFVDAPGHETLMATMLSGAALMDGAVLVVGANEPVPQPQTEEHLMALDIIGIENIVIAQNKVDLVDAEEARQNYEEIQAFVEGTVAEDAPVVPVSAEQEINVDLVIDALQTEIATPDRDPSADPLLYAARSFDINRPGTEWGGLLGGVIGGSLVDGELEAGDELELRPGREVEEGGKTEWRPVTTDVRSLQAGGEDVDSASPGGLLGVGTGLDPSLTKGDALAGQVAGPPGSLPPTWESFEMDVDLLERLVGAADGEQIDDISTGEPLMLTVGTATTVGSVTSARDGECEVALKRPVCAPAGAKIAINRRVGARWRLIGVGTLTESE.

The 198-residue stretch at Gln7 to Asp204 folds into the tr-type G domain. The segment at Gly16 to Thr23 is G1. Positions 19, 23, 44, and 46 each coordinate Mg(2+). Asp19–Thr24 contributes to the GTP binding site. A G2 region spans residues Gly44–Arg48. The segment at Asp91–Gly94 is G3. Residues Asn147–Asp150 and Ser182–Glu184 each bind GTP. Residues Asn147–Asp150 form a G4 region. The interval Ser182 to Glu184 is G5.

It belongs to the TRAFAC class translation factor GTPase superfamily. Classic translation factor GTPase family. EIF2G subfamily. As to quaternary structure, heterotrimer composed of an alpha, a beta and a gamma chain. Mg(2+) serves as cofactor.

The enzyme catalyses GTP + H2O = GDP + phosphate + H(+). Its function is as follows. eIF-2 functions in the early steps of protein synthesis by forming a ternary complex with GTP and initiator tRNA. In Halobacterium salinarum (strain ATCC 29341 / DSM 671 / R1), this protein is Translation initiation factor 2 subunit gamma.